A 394-amino-acid chain; its full sequence is 8-amino-7-oxononanoate synthase (394 aa).

Arg-21 lines the substrate pocket. 112–113 (GY) lines the pyridoxal 5'-phosphate pocket. Residue His-137 coordinates substrate. Residues Ser-183, His-211, and Thr-239 each coordinate pyridoxal 5'-phosphate. Residue Lys-242 is modified to N6-(pyridoxal phosphate)lysine. Thr-358 is a substrate binding site.

It belongs to the class-II pyridoxal-phosphate-dependent aminotransferase family. BioF subfamily. As to quaternary structure, homodimer. Requires pyridoxal 5'-phosphate as cofactor.

The enzyme catalyses 6-carboxyhexanoyl-[ACP] + L-alanine + H(+) = (8S)-8-amino-7-oxononanoate + holo-[ACP] + CO2. It functions in the pathway cofactor biosynthesis; biotin biosynthesis. In terms of biological role, catalyzes the decarboxylative condensation of pimeloyl-[acyl-carrier protein] and L-alanine to produce 8-amino-7-oxononanoate (AON), [acyl-carrier protein], and carbon dioxide. This is 8-amino-7-oxononanoate synthase from Burkholderia pseudomallei (strain 1710b).